The chain runs to 416 residues: Gamma-glutamyl phosphate reductase (416 aa).

It belongs to the gamma-glutamyl phosphate reductase family.

The protein resides in the cytoplasm. The catalysed reaction is L-glutamate 5-semialdehyde + phosphate + NADP(+) = L-glutamyl 5-phosphate + NADPH + H(+). Its pathway is amino-acid biosynthesis; L-proline biosynthesis; L-glutamate 5-semialdehyde from L-glutamate: step 2/2. In terms of biological role, catalyzes the NADPH-dependent reduction of L-glutamate 5-phosphate into L-glutamate 5-semialdehyde and phosphate. The product spontaneously undergoes cyclization to form 1-pyrroline-5-carboxylate. The polypeptide is Gamma-glutamyl phosphate reductase (Streptococcus thermophilus).